Consider the following 119-residue polypeptide: Small ribosomal subunit protein uS10 (119 aa).

Belongs to the universal ribosomal protein uS10 family. As to quaternary structure, component of the small ribosomal subunit. Mature ribosomes consist of a small (40S) and a large (60S) subunit. The 40S subunit contains about 32 different proteins and 1 molecule of RNA (18S). The 60S subunit contains 45 different proteins and 3 molecules of RNA (25S, 5.8S and 5S).

Its subcellular location is the cytoplasm. Component of the ribosome, a large ribonucleoprotein complex responsible for the synthesis of proteins in the cell. The small ribosomal subunit (SSU) binds messenger RNAs (mRNAs) and translates the encoded message by selecting cognate aminoacyl-transfer RNA (tRNA) molecules. The large subunit (LSU) contains the ribosomal catalytic site termed the peptidyl transferase center (PTC), which catalyzes the formation of peptide bonds, thereby polymerizing the amino acids delivered by tRNAs into a polypeptide chain. The nascent polypeptides leave the ribosome through a tunnel in the LSU and interact with protein factors that function in enzymatic processing, targeting, and the membrane insertion of nascent chains at the exit of the ribosomal tunnel. This Candida albicans (strain SC5314 / ATCC MYA-2876) (Yeast) protein is Small ribosomal subunit protein uS10 (RPS20).